Consider the following 207-residue polypeptide: Guanylate kinase (207 aa).

The Guanylate kinase-like domain maps to 7–185; sequence GIVLVLCAPS…AYDELRAAYI (179 aa). ATP is bound at residue 14–21; it reads APSGTGKT.

It belongs to the guanylate kinase family.

The protein resides in the cytoplasm. It carries out the reaction GMP + ATP = GDP + ADP. Its function is as follows. Essential for recycling GMP and indirectly, cGMP. The protein is Guanylate kinase of Nitratidesulfovibrio vulgaris (strain ATCC 29579 / DSM 644 / CCUG 34227 / NCIMB 8303 / VKM B-1760 / Hildenborough) (Desulfovibrio vulgaris).